A 260-amino-acid chain; its full sequence is GDNF family receptor alpha-4 (260 aa).

A signal peptide spans 1 to 23; that stretch reads MAHCMESALLLLLLLGSASFTDG. The N-linked (GlcNAc...) asparagine glycan is linked to asparagine 184. Threonine 237 carries GPI-anchor amidated threonine lipidation. A propeptide spans 238-260 (removed in mature form); that stretch reads AGCCFPRVSWLYALTALALQALL.

Belongs to the GDNFR family. As to quaternary structure, interacts with ARTN ligand and RET: forms a 2:2:2 ternary complex composed of ARTN ligand, GFRA3 and RET receptor. Interacts with SORL1. As to expression, expressed in many tissues including adrenal medulla, brain neurons, with highest levels in the cerebral cortex and hippocampus. Moderate levels found in the gut circular muscle and myenteric ganglia as well as in other peripheral ganglia, including the sensory dorsal root and trigeminal as well as superior cervical and sympathetic chain ganglia. Isoform a1, isoform a2, isoform b1 and isoform b2 are exclusively found in the thyroid, parthyroid and pituitary glands.

The protein localises to the cell membrane. It is found in the secreted. Its function is as follows. Receptor for persephin (PSPN), a growth factor that exhibits neurotrophic activity on mesencephalic dopaminergic and motor neurons. Acts by binding to its coreceptor, GFRA4, leading to autophosphorylation and activation of the RET receptor. May be important in C-cell development and, in the postnatal development of the adrenal medulla. The protein is GDNF family receptor alpha-4 (Gfra4) of Mus musculus (Mouse).